The sequence spans 641 residues: 1,3-beta-glucanosyltransferase PGA5 (641 aa).

The first 23 residues, M1–S23, serve as a signal peptide directing secretion. An N-linked (GlcNAc...) asparagine glycan is attached at N25. C106 and C135 form a disulfide bridge. (1,3-beta-D-glucosyl)n is bound by residues Y124, N192, E193, D234, and R239. The active-site Proton donor is the E193. Disulfide bonds link C248–C390, C276–C307, C424–C474, C426–C528, C433–C498, and C451–C456. The active-site Nucleophile is the E304. A (1,3-beta-D-glucosyl)n-binding site is contributed by Y336. The tract at residues K535–G613 is disordered. Positions K571 to I581 are enriched in basic and acidic residues. A compositionally biased stretch (acidic residues) spans E582–E593. The segment covering K596–S610 has biased composition (polar residues). An N-linked (GlcNAc...) asparagine glycan is attached at N621. D622 is lipidated: GPI-anchor amidated aspartate. Positions S623 to I641 are cleaved as a propeptide — removed in mature form.

This sequence belongs to the glycosyl hydrolase 72 family.

It localises to the cell membrane. Splits internally a 1,3-beta-glucan molecule and transfers the newly generated reducing end (the donor) to the non-reducing end of another 1,3-beta-glucan molecule (the acceptor) forming a 1,3-beta linkage, resulting in the elongation of 1,3-beta-glucan chains in the cell wall. Involved in spore wall assembly. This chain is 1,3-beta-glucanosyltransferase PGA5 (PGA5), found in Candida albicans (strain SC5314 / ATCC MYA-2876) (Yeast).